The primary structure comprises 251 residues: Orcokinin peptides type A (251 aa).

Positions 1–20 are cleaved as a signal peptide; that stretch reads MTAQMFTIALLLSLSAIAAA. 3 propeptides span residues 21–46, 225–231, and 249–251; these read GTIK…GAPV, DYDVFPD, and NVE.

Belongs to the orcokinin family.

The protein resides in the secreted. In terms of biological role, myotropic peptides that enhance both the frequency and amplitude of spontaneous hindgut contractions. This chain is Orcokinin peptides type A, found in Procambarus clarkii (Red swamp crayfish).